The sequence spans 322 residues: HPr kinase/phosphorylase (322 aa).

Catalysis depends on residues histidine 146 and lysine 167. Position 161 to 168 (161 to 168 (GDSGLGKS)) interacts with ATP. Mg(2+) is bound at residue serine 168. The active-site Proton acceptor; for phosphorylation activity. Proton donor; for dephosphorylation activity is aspartate 185. Positions 209–218 (LEVRGLGLLD) are important for the catalytic mechanism of both phosphorylation and dephosphorylation. Residue glutamate 210 coordinates Mg(2+). Arginine 250 is an active-site residue. The important for the catalytic mechanism of dephosphorylation stretch occupies residues 271–276 (QVAAGR).

This sequence belongs to the HPrK/P family. In terms of assembly, homohexamer. Mg(2+) is required as a cofactor.

The catalysed reaction is [HPr protein]-L-serine + ATP = [HPr protein]-O-phospho-L-serine + ADP + H(+). The enzyme catalyses [HPr protein]-O-phospho-L-serine + phosphate + H(+) = [HPr protein]-L-serine + diphosphate. Functionally, catalyzes the ATP- as well as the pyrophosphate-dependent phosphorylation of a specific serine residue in HPr, a phosphocarrier protein of the phosphoenolpyruvate-dependent sugar phosphotransferase system (PTS). HprK/P also catalyzes the pyrophosphate-producing, inorganic phosphate-dependent dephosphorylation (phosphorolysis) of seryl-phosphorylated HPr (P-Ser-HPr). This Burkholderia mallei (strain NCTC 10247) protein is HPr kinase/phosphorylase.